The chain runs to 151 residues: Protein InSETG-4 (151 aa).

The protein resides in the cytoplasm. The protein localises to the cytosol. The protein is Protein InSETG-4 (InSet4-G) of Homo sapiens (Human).